The primary structure comprises 147 residues: Large ribosomal subunit protein uL15 (147 aa).

The disordered stretch occupies residues Ser16–Arg63. A compositionally biased stretch (gly residues) spans Arg23 to Ala33. The span at Gly34–Gly47 shows a compositional bias: basic residues.

The protein belongs to the universal ribosomal protein uL15 family. In terms of assembly, part of the 50S ribosomal subunit.

Binds to the 23S rRNA. This chain is Large ribosomal subunit protein uL15, found in Xylella fastidiosa (strain Temecula1 / ATCC 700964).